A 265-amino-acid polypeptide reads, in one-letter code: Glutamate racemase 2 (265 aa).

Residues 7 to 8 and 39 to 40 each bind substrate; these read DS and YG. Catalysis depends on C70, which acts as the Proton donor/acceptor. Residue 71-72 participates in substrate binding; it reads NT. The Proton donor/acceptor role is filled by C182. Residue 183–184 coordinates substrate; sequence TH.

It belongs to the aspartate/glutamate racemases family.

It carries out the reaction L-glutamate = D-glutamate. It functions in the pathway cell wall biogenesis; peptidoglycan biosynthesis. Its function is as follows. Provides the (R)-glutamate required for cell wall biosynthesis. In Bacillus subtilis (strain 168), this protein is Glutamate racemase 2 (yrpC).